Consider the following 467-residue polypeptide: Chlorophenol O-methyltransferase (467 aa).

Residues 1-41 (MAELRAPSSLSTERNGSASNTDVDKQKLNHLYQNGNKKTGS) are disordered. Composition is skewed to polar residues over residues 8 to 21 (SSLS…ASNT) and 31 to 41 (LYQNGNKKTGS). An S-adenosyl-L-methionine-binding site is contributed by Asp-320. Residue His-368 is the Proton acceptor of the active site.

Belongs to the class I-like SAM-binding methyltransferase superfamily. Cation-independent O-methyltransferase family.

The catalysed reaction is 2,4,6-trichlorophenol + S-adenosyl-L-methionine = 2,4,6-trichloroanisole + S-adenosyl-L-homocysteine. With respect to regulation, S-adenosyl-L-homocysteine acts as a competitive inhibitor. Also strongly inhibited by low concentrations of several metal ions, such as Cu(2+), Hg(2+), Zn(2+), and Ag(+), and to a lesser extent by p-chloromercuribenzoic acid, but it is not significantly affected by several thiols or other thiol reagents. Functionally, chlorophenol O-methyltransferase that methylates chlorophenols into chloroanisoles which are thought to be responsible for cork taint of wines. The only single chlorophenol (CP) methylated is 2-CP; neither 3-CP nor 4-CP are effective substrates. Within the dichlorophenols (DCPs), 2,4-DCP supports the highest rate of O-methylation, and the activity decreases in the following order: 2,3-DCP, 2,5-DCP, 2,6-DCP, and 3,4-DCP. Within the trichlorophenol (TCP) group, the maximal activity is observed with 2,3,4-TCP, whereas there is increasingly reduced activity with 2,4,5-TCP, 2,4,6-TCP, and 2,3,6-TCP. The only tetrachlorophenol (TeCP) that is methylated is 2,3,4,5-TeCP, since no activity can be detected with 2,3,4,6-TeCP and 2,3,5,6-TeCP. Is also able to methylate other halogenated phenols containing fluoro or bromo substituents, whereas other hydroxylated compounds, such as hydroxylated benzoic acids, hydroxybenzaldehydes, phenol, 2-metoxyphenol, and dihydroxybenzene, were not methylated. The sequence is that of Chlorophenol O-methyltransferase from Trichoderma longibrachiatum.